The sequence spans 690 residues: Serotransferrin (690 aa).

Residues 1-17 form the signal peptide; the sequence is MKPLLLLTLLGCLAAAL. 2 consecutive Transferrin-like domains span residues 24–329 and 340–670; these read VKWC…SLKK and IKWC…SLRK. Cys27 and Cys49 are joined by a disulfide. Positions 73 and 103 each coordinate Fe(3+). Disulfide bonds link Cys126/Cys206, Cys171/Cys185, and Cys234/Cys248. Hydrogencarbonate contacts are provided by Thr128, Lys132, Ala134, and Gly135. Tyr200 contacts Fe(3+). His256 provides a ligand contact to Fe(3+). Cystine bridges form between Cys343–Cys379 and Cys353–Cys370. Positions 394 and 429 each coordinate Fe(3+). 7 disulfide bridges follow: Cys404/Cys682, Cys419/Cys643, Cys452/Cys530, Cys476/Cys671, Cys486/Cys499, Cys496/Cys513, and Cys570/Cys584. Thr454, Arg458, Ala460, and Gly461 together coordinate hydrogencarbonate. Tyr524 provides a ligand contact to Fe(3+). Fe(3+) is bound at residue His592.

This sequence belongs to the transferrin family. Monomer.

It localises to the secreted. Transferrins are iron binding transport proteins which can bind two Fe(3+) ions in association with the binding of an anion, usually bicarbonate. This Oryzias latipes (Japanese rice fish) protein is Serotransferrin (tf).